We begin with the raw amino-acid sequence, 819 residues long: Ion-translocating oxidoreductase complex subunit C (819 aa).

4Fe-4S ferredoxin-type domains are found at residues Glu368–Tyr398 and Lys408–Phe437. Residues Cys378, Cys381, Cys384, Cys388, Cys417, Cys420, Cys423, and Cys427 each coordinate [4Fe-4S] cluster. Basic and acidic residues-rich tracts occupy residues Gln465–Ala477 and Ala485–Glu513. Disordered stretches follow at residues Gln465 to Lys568, Ala580 to Asp677, and Ala692 to Ala793. Composition is skewed to polar residues over residues Val554–Asn565 and Asn587–Asn601. Residues Gln602–Gln614 show a composition bias toward basic and acidic residues. A compositionally biased stretch (polar residues) spans Gln641–Glu656. Over residues Glu658–Glu671 the composition is skewed to basic and acidic residues. 2 stretches are compositionally biased toward polar residues: residues Asn699 to Glu712 and Asn755 to Glu768. The segment covering Glu770–Gln782 has biased composition (basic and acidic residues).

It belongs to the 4Fe4S bacterial-type ferredoxin family. RnfC subfamily. In terms of assembly, the complex is composed of six subunits: RnfA, RnfB, RnfC, RnfD, RnfE and RnfG. [4Fe-4S] cluster is required as a cofactor.

Its subcellular location is the cell inner membrane. In terms of biological role, part of a membrane-bound complex that couples electron transfer with translocation of ions across the membrane. The polypeptide is Ion-translocating oxidoreductase complex subunit C (Haemophilus influenzae (strain ATCC 51907 / DSM 11121 / KW20 / Rd)).